The primary structure comprises 178 residues: Ribosome maturation factor RimM (178 aa).

A PRC barrel domain is found at Glu95–Ile174.

This sequence belongs to the RimM family. As to quaternary structure, binds ribosomal protein uS19.

It localises to the cytoplasm. Its function is as follows. An accessory protein needed during the final step in the assembly of 30S ribosomal subunit, possibly for assembly of the head region. Essential for efficient processing of 16S rRNA. May be needed both before and after RbfA during the maturation of 16S rRNA. It has affinity for free ribosomal 30S subunits but not for 70S ribosomes. The protein is Ribosome maturation factor RimM of Sulfurovum sp. (strain NBC37-1).